Here is a 33-residue protein sequence, read N- to C-terminus: Photosystem II reaction center protein Psb30 (33 aa).

A helical transmembrane segment spans residues 5-25 (VIAQLTVLALIVASGPLVIAL).

The protein belongs to the Psb30/Ycf12 family. In terms of assembly, PSII is composed of 1 copy each of membrane proteins PsbA, PsbB, PsbC, PsbD, PsbE, PsbF, PsbH, PsbI, PsbJ, PsbK, PsbL, PsbM, PsbT, PsbX, PsbY, PsbZ, Psb30/Ycf12, peripheral proteins of the oxygen-evolving complex and a large number of cofactors. It forms dimeric complexes.

The protein localises to the plastid. It localises to the chloroplast thylakoid membrane. Functionally, a core subunit of photosystem II (PSII), probably helps stabilize the reaction center. The protein is Photosystem II reaction center protein Psb30 of Marchantia polymorpha (Common liverwort).